Consider the following 868-residue polypeptide: Leucine--tRNA ligase (868 aa).

Residues 42–52 (PYPSGKLHMGH) carry the 'HIGH' region motif. Positions 627-631 (KMSKS) match the 'KMSKS' region motif. Residue K630 coordinates ATP.

It belongs to the class-I aminoacyl-tRNA synthetase family.

It is found in the cytoplasm. It carries out the reaction tRNA(Leu) + L-leucine + ATP = L-leucyl-tRNA(Leu) + AMP + diphosphate. The chain is Leucine--tRNA ligase from Pseudomonas putida (strain W619).